Consider the following 222-residue polypeptide: Small ribosomal subunit protein uS3 (222 aa).

Residues 39–107 (IRKYIKTKFY…QININIAEIK (69 aa)) enclose the KH type-2 domain.

The protein belongs to the universal ribosomal protein uS3 family. As to quaternary structure, part of the 30S ribosomal subunit. Forms a tight complex with proteins S10 and S14.

Binds the lower part of the 30S subunit head. Binds mRNA in the 70S ribosome, positioning it for translation. The chain is Small ribosomal subunit protein uS3 from Carboxydothermus hydrogenoformans (strain ATCC BAA-161 / DSM 6008 / Z-2901).